The chain runs to 65 residues: Large ribosomal subunit protein bL35c (65 aa).

Belongs to the bacterial ribosomal protein bL35 family.

It is found in the plastid. It localises to the cyanelle. The polypeptide is Large ribosomal subunit protein bL35c (rpl35) (Cyanophora paradoxa).